The chain runs to 134 residues: Profilin-2 (134 aa).

Cys-13 and Cys-118 are disulfide-bonded. Residues 84–100 carry the Involved in PIP2 interaction motif; the sequence is AVIRGKKGSGGITIKKT. Phosphothreonine is present on Thr-114.

Belongs to the profilin family. As to quaternary structure, occurs in many kinds of cells as a complex with monomeric actin in a 1:1 ratio. Phosphorylated by MAP kinases.

The protein localises to the cytoplasm. Its subcellular location is the cytoskeleton. Its function is as follows. Binds to actin and affects the structure of the cytoskeleton. At high concentrations, profilin prevents the polymerization of actin, whereas it enhances it at low concentrations. The protein is Profilin-2 of Olea europaea (Common olive).